The following is a 35-amino-acid chain: Photosystem II reaction center protein M (35 aa).

Residues 5-25 form a helical membrane-spanning segment; sequence IFGLTATALFIIIPTSFLLIL.

The protein belongs to the PsbM family. As to quaternary structure, PSII is composed of 1 copy each of membrane proteins PsbA, PsbB, PsbC, PsbD, PsbE, PsbF, PsbH, PsbI, PsbJ, PsbK, PsbL, PsbM, PsbT, PsbX, PsbY, PsbZ, Psb30/Ycf12, at least 3 peripheral proteins of the oxygen-evolving complex and a large number of cofactors. It forms dimeric complexes.

The protein localises to the plastid. It localises to the chloroplast thylakoid membrane. Its function is as follows. One of the components of the core complex of photosystem II (PSII). PSII is a light-driven water:plastoquinone oxidoreductase that uses light energy to abstract electrons from H(2)O, generating O(2) and a proton gradient subsequently used for ATP formation. It consists of a core antenna complex that captures photons, and an electron transfer chain that converts photonic excitation into a charge separation. This subunit is found at the monomer-monomer interface. This is Photosystem II reaction center protein M from Tetradesmus obliquus (Green alga).